We begin with the raw amino-acid sequence, 303 residues long: Dihydroorotate dehydrogenase B (NAD(+)), catalytic subunit (303 aa).

FMN contacts are provided by residues Ser21 and 45 to 46 (KG). Substrate-binding positions include Lys45 and 69-73 (NAVGL). FMN contacts are provided by Asn99 and Asn127. Asn127 contacts substrate. Catalysis depends on Cys130, which acts as the Nucleophile. Residues Lys165 and Ile191 each contribute to the FMN site. 192–193 (NT) contributes to the substrate binding site. FMN contacts are provided by residues Gly217, 243-244 (GG), and 265-266 (GT).

This sequence belongs to the dihydroorotate dehydrogenase family. Type 1 subfamily. As to quaternary structure, heterotetramer of 2 PyrK and 2 PyrD type B subunits. It depends on FMN as a cofactor.

The protein resides in the cytoplasm. The enzyme catalyses (S)-dihydroorotate + NAD(+) = orotate + NADH + H(+). It functions in the pathway pyrimidine metabolism; UMP biosynthesis via de novo pathway; orotate from (S)-dihydroorotate (NAD(+) route): step 1/1. Its function is as follows. Catalyzes the conversion of dihydroorotate to orotate with NAD(+) as electron acceptor. This chain is Dihydroorotate dehydrogenase B (NAD(+)), catalytic subunit (pyrD), found in Phocaeicola vulgatus (strain ATCC 8482 / DSM 1447 / JCM 5826 / CCUG 4940 / NBRC 14291 / NCTC 11154) (Bacteroides vulgatus).